The primary structure comprises 231 residues: NADH-quinone oxidoreductase subunit C (231 aa).

This sequence belongs to the complex I 30 kDa subunit family. As to quaternary structure, NDH-1 is composed of 14 different subunits. Subunits NuoB, C, D, E, F, and G constitute the peripheral sector of the complex.

It is found in the cell membrane. The catalysed reaction is a quinone + NADH + 5 H(+)(in) = a quinol + NAD(+) + 4 H(+)(out). NDH-1 shuttles electrons from NADH, via FMN and iron-sulfur (Fe-S) centers, to quinones in the respiratory chain. The immediate electron acceptor for the enzyme in this species is believed to be a menaquinone. Couples the redox reaction to proton translocation (for every two electrons transferred, four hydrogen ions are translocated across the cytoplasmic membrane), and thus conserves the redox energy in a proton gradient. This Mycobacterium sp. (strain JLS) protein is NADH-quinone oxidoreductase subunit C.